A 176-amino-acid polypeptide reads, in one-letter code: Ribosome rescue factor SmrB (176 aa).

The region spanning 98–173 (LDLHGLNQYQ…NDAAIMVIIE (76 aa)) is the Smr domain.

The protein belongs to the SmrB family. Associates with collided ribosomes, but not with correctly translating polysomes.

Its function is as follows. Acts as a ribosome collision sensor. Detects stalled/collided disomes (pairs of ribosomes where the leading ribosome is stalled and a second ribosome has collided with it) and endonucleolytically cleaves mRNA at the 5' boundary of the stalled ribosome. Stalled/collided disomes form a new interface (primarily via the 30S subunits) that binds SmrB. Cleaved mRNA becomes available for tmRNA ligation, leading to ribosomal subunit dissociation and rescue of stalled ribosomes. The protein is Ribosome rescue factor SmrB of Buchnera aphidicola subsp. Schizaphis graminum (strain Sg).